Consider the following 803-residue polypeptide: Leucine--tRNA ligase (803 aa).

Residues 40–51 (PYPSGAGLHVGH) carry the 'HIGH' region motif. A 'KMSKS' region motif is present at residues 575–579 (KMSKS). An ATP-binding site is contributed by Lys-578.

This sequence belongs to the class-I aminoacyl-tRNA synthetase family.

Its subcellular location is the cytoplasm. The catalysed reaction is tRNA(Leu) + L-leucine + ATP = L-leucyl-tRNA(Leu) + AMP + diphosphate. The chain is Leucine--tRNA ligase from Listeria monocytogenes serotype 4a (strain HCC23).